The primary structure comprises 591 residues: Lysyl oxidase homolog 1 (591 aa).

The first 22 residues, 1-22 (MALALTGWQLVWGACVCVLVHG), serve as a signal peptide directing secretion. A propeptide spanning residues 23–91 (QQAPPGQGSD…PRRRGGLRRR (69 aa)) is cleaved from the precursor. Disordered stretches follow at residues 77 to 107 (APQAPPRRRGGLRRRQAPSLPLPGRVGSDTV) and 233 to 373 (EYGG…RLSV). Over residues 82–92 (PRRRGGLRRRQ) the composition is skewed to basic residues. Residues 298-313 (NGGGGGGTYGGGGGDP) show a composition bias toward gly residues. Residues 319–386 (PPYGNMPPEA…YRPNQNGRGL (68 aa)) are interaction with FBLN5. The segment at 387 to 591 (PDLVPDPNYV…STTNCKIVQS (205 aa)) is lysyl-oxidase like. 5 disulfides stabilise this stretch: Cys412-Cys418, Cys465-Cys514, Cys498-Cys504, Cys525-Cys535, and Cys572-Cys586. Cu cation is bound by residues His466, His468, and His470. A cross-link (lysine tyrosylquinone (Lys-Tyr)) is located at residues 494–529 (KASFCLEDSTCDFGNLKRYACTSHTQGLSPGCYDTY). The residue at position 529 (Tyr529) is a 2',4',5'-topaquinone.

The protein belongs to the lysyl oxidase family. Interacts (via propeptide) with EFEMP2. Interacts with FBLN5. Cu cation is required as a cofactor. It depends on lysine tyrosylquinone residue as a cofactor. Post-translationally, the lysine tyrosylquinone cross-link (LTQ) is generated by condensation of the epsilon-amino group of a lysine with a topaquinone produced by oxidation of tyrosine. Proteolytic processing by a furin-like protease causes removal of N-terminal propeptide resulting in an enzyme largely inactive, but further proteolytic processing by BMP1 results in enzyme activation.

The protein localises to the secreted. It localises to the extracellular space. The protein resides in the extracellular matrix. It catalyses the reaction L-lysyl-[protein] + O2 + H2O = (S)-2-amino-6-oxohexanoyl-[protein] + H2O2 + NH4(+). Catalyzes the oxidative deamination of lysine and hydroxylysine residues in collagen and elastin, resulting in the formation of covalent cross-linkages, and the stabilization of collagen and elastin fibers. Essential for the elastic fiber homeostasis and for their maintenance at adult age. In Bos taurus (Bovine), this protein is Lysyl oxidase homolog 1 (LOXL1).